The chain runs to 254 residues: Ribonuclease HII (254 aa).

Positions 70–254 (QAIAGIDEVG…TFEPIKSMYE (185 aa)) constitute an RNase H type-2 domain. Residues D76, E77, and D168 each contribute to the a divalent metal cation site.

The protein belongs to the RNase HII family. The cofactor is Mn(2+). Mg(2+) is required as a cofactor.

The protein resides in the cytoplasm. It carries out the reaction Endonucleolytic cleavage to 5'-phosphomonoester.. In terms of biological role, endonuclease that specifically degrades the RNA of RNA-DNA hybrids. The protein is Ribonuclease HII of Streptococcus sanguinis (strain SK36).